We begin with the raw amino-acid sequence, 142 residues long: Protein KNATM (142 aa).

The stretch at 4–36 (KKDENSILENMKQEINHSLKEEAQEEEEILKKR) forms a coiled coil.

Interacts with KNAT1, KNAT3, KNAT4, BEL1, BLH2, BLH4 and BLH9, but not with BLH8 or the KNATM-A and KNATM-C isoforms. Isoforms KNATM-A and KNATM-C: no interactions with KNATM-B, KNOXX or BELL proteins. In terms of tissue distribution, detected in inflorescences, seedlings, leaves, hydathodes, stems, roots, embryo and siliques. Expressed in a polar pattern in organ primordia and at the boundary of mature organs. Detected in the lateral domains of flower meristems, but not in the inflorescence meristem or the vegetative shoot apical meristem.

It localises to the cytoplasm. It is found in the nucleus. In terms of biological role, transcriptional regulator involved in leaf proximal/distal patterning. May act by sequestering BELL transcription factors. In Arabidopsis thaliana (Mouse-ear cress), this protein is Protein KNATM.